The sequence spans 347 residues: Tyrosine recombinase XerC 2 (347 aa).

The 92-residue stretch at 17–108 (LVLTRYMEAH…PLKTWFKWLA (92 aa)) folds into the Core-binding (CB) domain. In terms of domain architecture, Tyr recombinase spans 125–313 (KLPKHLPRAI…SIEHLRAIHD (189 aa)). Catalysis depends on residues arginine 170, lysine 195, histidine 265, arginine 268, and histidine 291. The active-site O-(3'-phospho-DNA)-tyrosine intermediate is the tyrosine 300.

Belongs to the 'phage' integrase family.

The protein localises to the cytoplasm. Functionally, site-specific tyrosine recombinase, which acts by catalyzing the cutting and rejoining of the recombining DNA molecules. This is Tyrosine recombinase XerC 2 from Ralstonia nicotianae (strain ATCC BAA-1114 / GMI1000) (Ralstonia solanacearum).